Here is a 965-residue protein sequence, read N- to C-terminus: Probable serine/threonine-protein kinase DDB_G0291516 (965 aa).

The segment at 114 to 170 (KDSQKELLPSPQQLTPPTSLPSLPLLPLPQAPEQNEEQQLTQPPSPPSIPPPPPQKK) is disordered. 2 stretches are compositionally biased toward low complexity: residues 119–136 (ELLP…LPSL) and 144–155 (APEQNEEQQLTQ). The segment covering 156 to 168 (PPSPPSIPPPPPQ) has biased composition (pro residues). 2 ANK repeats span residues 271–301 (KGET…HMGI) and 310–339 (LNKN…PLKM). Residues 459-739 (IDFHTQIGSA…NVKAIKKEFL (281 aa)) enclose the Protein kinase domain. ATP-binding positions include 465-473 (IGSAGNASV) and Lys-486. The Proton acceptor role is filled by Asp-587. Residues 653-673 (IYSLGIILWELVCVAMTGTYI) form a helical membrane-spanning segment. N-linked (GlcNAc...) asparagine glycans are attached at residues Asn-760, Asn-765, Asn-905, Asn-909, Asn-910, Asn-914, Asn-934, and Asn-938. Residues 881–940 (NINKNKNNNNNNNNNNNNNNNINNNNTFNNSTNNNSNDNINIPYDFNNNNNNNNNSCNNS) show a composition bias toward low complexity. Residues 881–942 (NINKNKNNNN…NNNSCNNSKK (62 aa)) form a disordered region.

Belongs to the protein kinase superfamily. Ser/Thr protein kinase family.

The protein resides in the membrane. The enzyme catalyses L-seryl-[protein] + ATP = O-phospho-L-seryl-[protein] + ADP + H(+). It carries out the reaction L-threonyl-[protein] + ATP = O-phospho-L-threonyl-[protein] + ADP + H(+). This Dictyostelium discoideum (Social amoeba) protein is Probable serine/threonine-protein kinase DDB_G0291516.